The chain runs to 251 residues: MNKVRTCWNEGRPALAGWLQLPGTLHAEALARLDYDAVVIDMQHSPIDFGQVAPMLIAIELGGAEPFVRTQVNDPSDIMKLLDAGAYGIIAPMVNTRAEAQTLASALHYSPRGLRSFGPRRPSLRYGSGYLAQASETVVGLAMIETREALANIDEILSVDGIDGVFIGPTDLALDLGHAPLVDTEEAEVVSAIAHVRERAHAAGKRVGIFCGSGGFARVKLAEGFDFVTAAPDLAMLSAAARQVIADARAL.

His-44 functions as the Proton acceptor in the catalytic mechanism. Arg-69 is a 3-hydroxypyruvate binding site. Glu-145 provides a ligand contact to Mg(2+). The 3-hydroxypyruvate site is built by Thr-170 and Asp-171. Asp-171 is a binding site for Mg(2+).

It belongs to the HpcH/HpaI aldolase family. In terms of assembly, homohexamer. Trimer of homodimers. Mn(2+) serves as cofactor. It depends on Mg(2+) as a cofactor. Co(2+) is required as a cofactor. The cofactor is Zn(2+).

The enzyme catalyses D-glyceraldehyde + 3-hydroxypyruvate = 2-dehydro-D-galactonate. It carries out the reaction D-glyceraldehyde + pyruvate = 2-dehydro-3-deoxy-L-galactonate. The catalysed reaction is L-glyceraldehyde + 3-hydroxypyruvate = (3S,4S,5S)-3,4,5,6-tetrahydroxy-2-oxohexanoate. It catalyses the reaction (R)-lactaldehyde + 3-hydroxypyruvate = (3S,4S,5R)-3,4,5-trihydroxy-2-oxohexanoate. The enzyme catalyses (R)-lactaldehyde + 3-hydroxypyruvate = (3S,4R,5R)-3,4,5-trihydroxy-2-oxohexanoate. It carries out the reaction (S)-lactaldehyde + 3-hydroxypyruvate = (3S,4S,5S)-3,4,5-trihydroxy-2-oxohexanoate. The catalysed reaction is D-erythrose + 3-hydroxypyruvate = (3S,4S,5R,6R)-3,4,5,6,7-pentahydroxy-2-oxoheptanoate. Binding of substrate induces a dynamic movement of the metal cofactor between an inactive coordination sphere to a catalytically active one. When oxaloacetate is used as substrate, activity is increased in the presence of micromolar concentrations of inorganic phosphate. The phosphate does not improve the binding of the substrate, but exclusively increases its rate of decarboxylation. Excessive phosphate concentrations negatively affect the reaction rate by removing the metal cofactor. In terms of biological role, aldolase which can catalyze in vitro the aldolisation reaction between hydroxypyruvate (HPA) or pyruvate (PA) and D-glyceraldehyde (D-GA). The condensation of hydroxypyruvate and D-glyceraldehyde produces 2-dehydro-D-galactonate as the major product. The condensation of pyruvate and D-glyceraldehyde produces 2-dehydro-3-deoxy-L-galactonate. Can use other electrophilic substrates such as L-glyceraldehyde, D- and L-lactaldehyde and D-erythrose. Also catalyzes the retro-aldol type decarboxylation of oxaloacetate, a general property of known pyruvate aldolases. The chain is Hydroxypyruvate/pyruvate aldolase from Rhizorhabdus wittichii (strain DSM 6014 / CCUG 31198 / JCM 15750 / NBRC 105917 / EY 4224 / RW1) (Sphingomonas wittichii).